A 133-amino-acid chain; its full sequence is Ycf54-like protein (133 aa).

Belongs to the ycf54 family.

The sequence is that of Ycf54-like protein from Synechocystis sp. (strain ATCC 27184 / PCC 6803 / Kazusa).